The primary structure comprises 507 residues: ATP synthase subunit alpha, chloroplastic (507 aa).

Position 170–177 (170–177 (GDRQTGKT)) interacts with ATP.

Belongs to the ATPase alpha/beta chains family. In terms of assembly, F-type ATPases have 2 components, CF(1) - the catalytic core - and CF(0) - the membrane proton channel. CF(1) has five subunits: alpha(3), beta(3), gamma(1), delta(1), epsilon(1). CF(0) has four main subunits: a, b, b' and c.

The protein localises to the plastid. The protein resides in the chloroplast thylakoid membrane. It carries out the reaction ATP + H2O + 4 H(+)(in) = ADP + phosphate + 5 H(+)(out). Its function is as follows. Produces ATP from ADP in the presence of a proton gradient across the membrane. The alpha chain is a regulatory subunit. This chain is ATP synthase subunit alpha, chloroplastic, found in Solanum bulbocastanum (Wild potato).